A 378-amino-acid chain; its full sequence is Erythronate-4-phosphate dehydrogenase (378 aa).

Residues Ser-45 and Thr-66 each contribute to the substrate site. Residues Asp-146 and Thr-175 each contribute to the NAD(+) site. Residue Arg-208 is part of the active site. Asp-232 is an NAD(+) binding site. Glu-237 is a catalytic residue. His-254 (proton donor) is an active-site residue. Gly-257 contributes to the NAD(+) binding site. Residue Tyr-258 participates in substrate binding.

The protein belongs to the D-isomer specific 2-hydroxyacid dehydrogenase family. PdxB subfamily. As to quaternary structure, homodimer.

The protein localises to the cytoplasm. It carries out the reaction 4-phospho-D-erythronate + NAD(+) = (R)-3-hydroxy-2-oxo-4-phosphooxybutanoate + NADH + H(+). It functions in the pathway cofactor biosynthesis; pyridoxine 5'-phosphate biosynthesis; pyridoxine 5'-phosphate from D-erythrose 4-phosphate: step 2/5. Functionally, catalyzes the oxidation of erythronate-4-phosphate to 3-hydroxy-2-oxo-4-phosphonooxybutanoate. This chain is Erythronate-4-phosphate dehydrogenase, found in Shigella flexneri serotype 5b (strain 8401).